Here is a 98-residue protein sequence, read N- to C-terminus: Large ribosomal subunit protein uL23 (98 aa).

This sequence belongs to the universal ribosomal protein uL23 family. In terms of assembly, part of the 50S ribosomal subunit. Contacts protein L29, and trigger factor when it is bound to the ribosome.

Its function is as follows. One of the early assembly proteins it binds 23S rRNA. One of the proteins that surrounds the polypeptide exit tunnel on the outside of the ribosome. Forms the main docking site for trigger factor binding to the ribosome. The chain is Large ribosomal subunit protein uL23 from Hahella chejuensis (strain KCTC 2396).